Here is a 163-residue protein sequence, read N- to C-terminus: MHCPFCRHDDSRVVDSRTTDDGSSIRRRRQCPNCSKRFSTVETASLSVIKRSGAPEPFSRAKIASGVRKACQGRPVSEDDIALLAHRVEEAVRAQGAAEIDAHQVGLATLPFLQELDEVAYLRFASVYQAFDSLADFESAIDRLRAQRAAVAVPPVEPVAARG.

A zinc finger spans residues 3–34 (CPFCRHDDSRVVDSRTTDDGSSIRRRRQCPNC). One can recognise an ATP-cone domain in the interval 46 to 136 (LSVIKRSGAP…VYQAFDSLAD (91 aa)).

This sequence belongs to the NrdR family. Requires Zn(2+) as cofactor.

In terms of biological role, negatively regulates transcription of bacterial ribonucleotide reductase nrd genes and operons by binding to NrdR-boxes. The sequence is that of Transcriptional repressor NrdR from Kineococcus radiotolerans (strain ATCC BAA-149 / DSM 14245 / SRS30216).